We begin with the raw amino-acid sequence, 671 residues long: MAHKKQAWAKRVKKERFKKKFLTRMQATRLLQMESVQFRRLCILKGIYPRALNRSKQKQSGHEKQYYLAREIKWLVRDQIAEKMMAYRAWEKKVKRAEAMGRSEDLKVLQSSRVKPRHSLVATIKERYPYFIDAIRDVDDAMSMIHLYAFLSPEIKSDTTIEIHHSLTSGMSEKAKEVCERWDRYVARARVLTKGFISIKGYYYEAIVKGERVRWLCPHEYAHRFPPGIQQYVMLSFLEFYLEMMKFVLFKLESDLARDEADRLAAEDEEGVTRANAEDFANGGALAVLDVGANGAQAKEVKEAESKRSLMGEELHKVRELFRGLTFFISREVPSKRFALVINACGGRVATDYVPSNITHVVVDRPALPPGMKKHDQLEYVQPQYIFDCLNARLMLPVTGYRIGEELPPHVSPFSVSITNSAEDNAAVEQVKKDHPRIVGYVPARVHEIRKLINPSYSAVDPEGKVAHLEGEYSDEESHVAVPEMDMEDDVSLSGDELAEARRKPAWQEEEVTEEVQRPKLSAFKVKKQREMNLMNAPTNEVVARRRQALRKAQEKSRQTETSEARLQRKMSEVKRQEAATRKMQLQVARKKAARFYKMISGVVQGTAKKAATLEAKAKHIAEGKLHKTEDGKGLVNTRLEARRQRAEAKSKKLKERKAGNPYKKLPKWVQ.

Residues 317-403 (KVRELFRGLT…LMLPVTGYRI (87 aa)) enclose the BRCT domain. The stretch at 548–584 (QALRKAQEKSRQTETSEARLQRKMSEVKRQEAATRKM) forms a coiled coil. 2 disordered regions span residues 552 to 578 (KAQE…KRQE) and 643 to 671 (RRQR…KWVQ).

The protein belongs to the pescadillo family.

The protein localises to the nucleus. Its subcellular location is the nucleolus. The protein resides in the nucleoplasm. Its function is as follows. Required for maturation of ribosomal RNAs and formation of the large ribosomal subunit. The chain is Pescadillo homolog from Leishmania infantum.